The primary structure comprises 548 residues: Alpha-humulene synthase (548 aa).

Residues Asp-302, Asp-306, and Glu-453 each coordinate Mg(2+). The short motif at Asp-302 to Asp-306 is the DDXXD motif element.

Belongs to the terpene synthase family. As to expression, mostly expressed in rhizomes.

The catalysed reaction is (2E,6E)-farnesyl diphosphate = alpha-humulene + diphosphate. In terms of biological role, catalyzes the formation of alpha-humulene in the first step of zerumbone biosynthesis, a highly promising multi-anticancer agent. Also mediates formation of beta-caryophyllene at a much lower level. This chain is Alpha-humulene synthase (ZSS1), found in Zingiber zerumbet (Shampoo ginger).